The sequence spans 449 residues: Probable glycine dehydrogenase (decarboxylating) subunit 1 (449 aa).

Belongs to the GcvP family. N-terminal subunit subfamily. In terms of assembly, the glycine cleavage system is composed of four proteins: P, T, L and H. In this organism, the P 'protein' is a heterodimer of two subunits.

It catalyses the reaction N(6)-[(R)-lipoyl]-L-lysyl-[glycine-cleavage complex H protein] + glycine + H(+) = N(6)-[(R)-S(8)-aminomethyldihydrolipoyl]-L-lysyl-[glycine-cleavage complex H protein] + CO2. In terms of biological role, the glycine cleavage system catalyzes the degradation of glycine. The P protein binds the alpha-amino group of glycine through its pyridoxal phosphate cofactor; CO(2) is released and the remaining methylamine moiety is then transferred to the lipoamide cofactor of the H protein. This Pyrococcus abyssi (strain GE5 / Orsay) protein is Probable glycine dehydrogenase (decarboxylating) subunit 1.